A 131-amino-acid polypeptide reads, in one-letter code: Small ribosomal subunit protein uS11 (131 aa).

Belongs to the universal ribosomal protein uS11 family. Part of the 30S ribosomal subunit. Interacts with proteins S7 and S18. Binds to IF-3.

Its function is as follows. Located on the platform of the 30S subunit, it bridges several disparate RNA helices of the 16S rRNA. Forms part of the Shine-Dalgarno cleft in the 70S ribosome. The protein is Small ribosomal subunit protein uS11 of Clostridium acetobutylicum (strain ATCC 824 / DSM 792 / JCM 1419 / IAM 19013 / LMG 5710 / NBRC 13948 / NRRL B-527 / VKM B-1787 / 2291 / W).